The primary structure comprises 110 residues: Large ribosomal subunit protein uL22 (110 aa).

The protein belongs to the universal ribosomal protein uL22 family. As to quaternary structure, part of the 50S ribosomal subunit.

In terms of biological role, this protein binds specifically to 23S rRNA; its binding is stimulated by other ribosomal proteins, e.g. L4, L17, and L20. It is important during the early stages of 50S assembly. It makes multiple contacts with different domains of the 23S rRNA in the assembled 50S subunit and ribosome. Functionally, the globular domain of the protein is located near the polypeptide exit tunnel on the outside of the subunit, while an extended beta-hairpin is found that lines the wall of the exit tunnel in the center of the 70S ribosome. The chain is Large ribosomal subunit protein uL22 from Marinobacter nauticus (strain ATCC 700491 / DSM 11845 / VT8) (Marinobacter aquaeolei).